The following is a 267-amino-acid chain: MKKLIFLLLIILLPVASFGATEITWYGHSSFKIQTPNGKVLLIDPWLTNPANKEGKRHLKELPKVDLILLTHAHGDHIGNSIEIAKETGAKLVATYDLGKAIVKYAGYPEKQFGYETTGNFGGEITLLNGEVKILFVPAVHSSALEIPDSPKSLIYGGNPGGFLISIKNGPTLYHTGDTDLFEDMKLLGLMYKVDIMMVCIGDKFTMGPKRAAIATKFVNPKMVIPMHFGTFPMLNGTVEEFEKEIAEQKIQTKILKIKIGETVKIE.

The protein belongs to the UPF0173 family.

The sequence is that of UPF0173 metal-dependent hydrolase THEYE_A0282 from Thermodesulfovibrio yellowstonii (strain ATCC 51303 / DSM 11347 / YP87).